The chain runs to 447 residues: Glutamate--tRNA ligase 1 (447 aa).

Positions Pro-10–Asn-20 match the 'HIGH' region motif. A 'KMSKS' region motif is present at residues Lys-240 to Arg-244. Lys-243 is an ATP binding site.

This sequence belongs to the class-I aminoacyl-tRNA synthetase family. Glutamate--tRNA ligase type 1 subfamily. In terms of assembly, monomer.

The protein localises to the cytoplasm. The catalysed reaction is tRNA(Glu) + L-glutamate + ATP = L-glutamyl-tRNA(Glu) + AMP + diphosphate. Catalyzes the attachment of glutamate to tRNA(Glu) in a two-step reaction: glutamate is first activated by ATP to form Glu-AMP and then transferred to the acceptor end of tRNA(Glu). The protein is Glutamate--tRNA ligase 1 of Rickettsia conorii (strain ATCC VR-613 / Malish 7).